Here is a 550-residue protein sequence, read N- to C-terminus: Eukaryotic translation initiation factor 3 subunit D-2 (550 aa).

The tract at residues 97 to 126 (RGRGFRPSVHNNPRNVRNQRGRKGNAMGNI) is disordered. An RNA gate region spans residues 287–301 (KFDMLTVNETSQEPP). Residues 530–550 (SDVSEEEESSEDKPFGLSMNN) are disordered.

Belongs to the eIF-3 subunit D family. Component of the eukaryotic translation initiation factor 3 (eIF-3) complex. The eIF-3 complex interacts with pix.

It localises to the cytoplasm. Its function is as follows. mRNA cap-binding component of the eukaryotic translation initiation factor 3 (eIF-3) complex, which is involved in protein synthesis of a specialized repertoire of mRNAs and, together with other initiation factors, stimulates binding of mRNA and methionyl-tRNAi to the 40S ribosome. The eIF-3 complex specifically targets and initiates translation of a subset of mRNAs involved in cell proliferation. In the eIF-3 complex, eif3d specifically recognizes and binds the 7-methylguanosine cap of a subset of mRNAs. In Drosophila willistoni (Fruit fly), this protein is Eukaryotic translation initiation factor 3 subunit D-2.